A 76-amino-acid polypeptide reads, in one-letter code: Translational regulator CsrA (76 aa).

Belongs to the CsrA/RsmA family. Homodimer; the beta-strands of each monomer intercalate to form a hydrophobic core, while the alpha-helices form wings that extend away from the core.

The protein localises to the cytoplasm. In terms of biological role, a translational regulator that binds mRNA to regulate translation initiation and/or mRNA stability. Usually binds in the 5'-UTR at or near the Shine-Dalgarno sequence preventing ribosome-binding, thus repressing translation. Its main target seems to be the major flagellin gene, while its function is anatagonized by FliW. The chain is Translational regulator CsrA from Syntrophomonas wolfei subsp. wolfei (strain DSM 2245B / Goettingen).